The chain runs to 159 residues: MVLLISSEVSARDLTETTSDAKKEVVEKTNEVNDAKYGGGYNHGGGGYNGGGYNHGGGGYNNGGGYNHGGGGYNNGGGGYNHGGGGYNNGGGGYNHGGGGYNNGGGGYNHGGGGYNGGGYNHGGGGYNHGGGGCQYHCHGRCCSHAEFVAMQAKDNTQN.

6 consecutive repeat copies span residues 38-49, 50-61, 63-74, 77-88, 91-102, and 105-116. The segment at 38–135 is 7 X 12 AA repeats of G-G-G-Y-N-H-G-G-G-Y-N; the sequence is GGGYNHGGGG…GYNHGGGGCQ (98 aa). A 7; approximate repeat occupies 124–135; the sequence is GGGYNHGGGGCQ.

It belongs to the GRP family.

This is Abscisic acid and environmental stress-inducible protein from Medicago sativa subsp. falcata (Sickle medic).